The sequence spans 126 residues: MSAKGSLLRLLWQCGMTRAAPESCRYLYTSSWRADCNRASLTRVHRQTYARLYPILLVKQDGSTIHIRYPEPRRILTMPVDLDSLSPEERRARFRKREGQLKEKKEEPELADDFDVEQYKQFWTKK.

A mitochondrion-targeting transit peptide spans 1-34 (MSAKGSLLRLLWQCGMTRAAPESCRYLYTSSWRA). Ser86 bears the Phosphoserine mark.

The protein belongs to the mitochondrion-specific ribosomal protein mL55 family. Component of the mitochondrial ribosome large subunit (39S) which comprises a 16S rRNA and about 50 distinct proteins.

Its subcellular location is the mitochondrion. The sequence is that of Large ribosomal subunit protein mL55 (MRPL55) from Bos taurus (Bovine).